Here is a 204-residue protein sequence, read N- to C-terminus: Large ribosomal subunit protein uL4 (204 aa).

Residues 47-69 (KAQKNRAAVSGGGKKPWRQKGTG) are disordered.

It belongs to the universal ribosomal protein uL4 family. Part of the 50S ribosomal subunit.

In terms of biological role, one of the primary rRNA binding proteins, this protein initially binds near the 5'-end of the 23S rRNA. It is important during the early stages of 50S assembly. It makes multiple contacts with different domains of the 23S rRNA in the assembled 50S subunit and ribosome. Its function is as follows. Forms part of the polypeptide exit tunnel. The chain is Large ribosomal subunit protein uL4 from Teredinibacter turnerae (strain ATCC 39867 / T7901).